The sequence spans 559 residues: Apolipoprotein N-acyltransferase 2 (559 aa).

The next 6 membrane-spanning stretches (helical) occupy residues 27–47, 53–73, 86–106, 114–134, 153–173, and 187–207; these read LAGS…GFLL, HVAC…SFWL, ASTV…ACIL, ACAF…GILA, IADI…NACV, and VPVF…SLYG. Residues 221 to 507 enclose the CN hydrolase domain; that stretch reads LALAIVQQNA…SAVLHVPVYP (287 aa). The active-site Proton acceptor is Glu288. The active site involves Lys358. The active-site Nucleophile is the Cys416. The helical transmembrane segment at 519–539 threads the bilayer; sequence WVIVLCALIFFAEGVRMAVHT.

The protein belongs to the CN hydrolase family. Apolipoprotein N-acyltransferase subfamily.

Its subcellular location is the cell inner membrane. It catalyses the reaction N-terminal S-1,2-diacyl-sn-glyceryl-L-cysteinyl-[lipoprotein] + a glycerophospholipid = N-acyl-S-1,2-diacyl-sn-glyceryl-L-cysteinyl-[lipoprotein] + a 2-acyl-sn-glycero-3-phospholipid + H(+). The protein operates within protein modification; lipoprotein biosynthesis (N-acyl transfer). Catalyzes the phospholipid dependent N-acylation of the N-terminal cysteine of apolipoprotein, the last step in lipoprotein maturation. The sequence is that of Apolipoprotein N-acyltransferase 2 from Treponema pallidum (strain Nichols).